Consider the following 326-residue polypeptide: NAD-dependent protein deacylase SIR5 (326 aa).

The transit peptide at 1–26 (MRLLRPTPRLSSIFSSKTATSNLRFF) directs the protein to the mitochondrion. The region spanning 28 to 324 (AMAPHNDVGA…IGKLETDKKE (297 aa)) is the Deacetylase sirtuin-type domain. 53–72 (GAGLSASSGLPTFRGAGGLW) lines the NAD(+) pocket. Residues Tyr97 and Arg100 each contribute to the substrate site. His151 functions as the Proton acceptor in the catalytic mechanism. Zn(2+) is bound by residues Cys159, Cys162, Cys211, and Cys214.

The protein belongs to the sirtuin family. Class I subfamily. As to quaternary structure, interacts with LAT1; the interaction is direct. The cofactor is Zn(2+).

The protein localises to the mitochondrion. It localises to the cytoplasm. Its subcellular location is the cytosol. It is found in the nucleus. The protein resides in the chromosome. It carries out the reaction N(6)-acetyl-L-lysyl-[protein] + NAD(+) + H2O = 2''-O-acetyl-ADP-D-ribose + nicotinamide + L-lysyl-[protein]. The enzyme catalyses N(6)-(2E)-butenoyl-L-lysyl-[protein] + H2O = (2E)-2-butenoate + L-lysyl-[protein]. Functionally, NAD-dependent protein-lysine deacylase that decrotonylates the PDC (pyruvate dehydrogenase complex) subunit LAT1 at 'Lys-148' to inhibit PDC activity and consequently ATP production. Also decrotonylates histone H3 crotonylated at 'Lys-18' (H3K18cr), to repress the expression of genes involved in aerobic respiration. May also act as a NAD-dependent deacetylase. Does not mediate desuccinylation, demalonylation, or deglutarylation of LAT1. In Fusarium oxysporum f. sp. lycopersici (strain 4287 / CBS 123668 / FGSC 9935 / NRRL 34936) (Fusarium vascular wilt of tomato), this protein is NAD-dependent protein deacylase SIR5.